The sequence spans 384 residues: Glucose-1-phosphate adenylyltransferase (384 aa).

Alpha-D-glucose 1-phosphate contacts are provided by residues Y103, G168, 183-184 (EK), and S194.

Belongs to the bacterial/plant glucose-1-phosphate adenylyltransferase family. As to quaternary structure, homotetramer.

The catalysed reaction is alpha-D-glucose 1-phosphate + ATP + H(+) = ADP-alpha-D-glucose + diphosphate. It participates in glycan biosynthesis; glycogen biosynthesis. Functionally, involved in the biosynthesis of ADP-glucose, a building block required for the elongation reactions to produce glycogen. Catalyzes the reaction between ATP and alpha-D-glucose 1-phosphate (G1P) to produce pyrophosphate and ADP-Glc. The protein is Glucose-1-phosphate adenylyltransferase of Fusobacterium nucleatum subsp. nucleatum (strain ATCC 25586 / DSM 15643 / BCRC 10681 / CIP 101130 / JCM 8532 / KCTC 2640 / LMG 13131 / VPI 4355).